A 43-amino-acid chain; its full sequence is Protein PsbN (43 aa).

Residues 4–24 (ATVLSITFAVILIAITGLAVY) traverse the membrane as a helical segment.

The protein belongs to the PsbN family.

It localises to the cellular thylakoid membrane. May play a role in photosystem I and II biogenesis. This is Protein PsbN from Synechocystis sp. (strain ATCC 27184 / PCC 6803 / Kazusa).